Consider the following 308-residue polypeptide: Aspartate carbamoyltransferase catalytic subunit (308 aa).

Carbamoyl phosphate contacts are provided by arginine 59 and threonine 60. An L-aspartate-binding site is contributed by lysine 87. Carbamoyl phosphate is bound by residues arginine 109, histidine 139, and glutamine 142. Residues arginine 172 and arginine 224 each contribute to the L-aspartate site. Carbamoyl phosphate contacts are provided by alanine 265 and proline 266.

This sequence belongs to the aspartate/ornithine carbamoyltransferase superfamily. ATCase family. As to quaternary structure, heterododecamer (2C3:3R2) of six catalytic PyrB chains organized as two trimers (C3), and six regulatory PyrI chains organized as three dimers (R2).

It catalyses the reaction carbamoyl phosphate + L-aspartate = N-carbamoyl-L-aspartate + phosphate + H(+). The protein operates within pyrimidine metabolism; UMP biosynthesis via de novo pathway; (S)-dihydroorotate from bicarbonate: step 2/3. Catalyzes the condensation of carbamoyl phosphate and aspartate to form carbamoyl aspartate and inorganic phosphate, the committed step in the de novo pyrimidine nucleotide biosynthesis pathway. The protein is Aspartate carbamoyltransferase catalytic subunit of Streptococcus mutans serotype c (strain ATCC 700610 / UA159).